We begin with the raw amino-acid sequence, 217 residues long: Thymidylate kinase (217 aa).

7-14 (GIEGAGKS) contributes to the ATP binding site.

Belongs to the thymidylate kinase family.

The catalysed reaction is dTMP + ATP = dTDP + ADP. Its function is as follows. Phosphorylation of dTMP to form dTDP in both de novo and salvage pathways of dTTP synthesis. In Desulfovibrio desulfuricans (strain ATCC 27774 / DSM 6949 / MB), this protein is Thymidylate kinase.